Here is a 232-residue protein sequence, read N- to C-terminus: V-type ATP synthase subunit E (232 aa).

This sequence belongs to the V-ATPase E subunit family.

Its function is as follows. Produces ATP from ADP in the presence of a proton gradient across the membrane. The polypeptide is V-type ATP synthase subunit E (atpE) (Treponema pallidum (strain Nichols)).